The following is a 252-amino-acid chain: Transmembrane ascorbate-dependent reductase CYB561 (252 aa).

Methionine 1 carries the N-acetylmethionine modification. At 1 to 17 the chain is on the cytoplasmic side; it reads MESPAGRTPAPGALPYY. A helical transmembrane segment spans residues 18–38; the sequence is VAFSQLLGLTVVAVTGAWLGA. Residues 20–221 form the Cytochrome b561 domain; the sequence is FSQLLGLTVV…FGAVVLYILT (202 aa). The Vesicular segment spans residues 39–52; the sequence is YRGGIAWESALQFN. Residues 53–73 traverse the membrane as a helical segment; sequence VHPLCMIIGLVFLQGDALLVY. Residues histidine 54, arginine 74, and lysine 81 each coordinate heme b. Over 74–85 the chain is Cytoplasmic; the sequence is RVFRNEAKRTTK. Positions 81 and 85 each coordinate L-ascorbate. A helical transmembrane segment spans residues 86–106; sequence ILHGLLHVLAFVIALVGLVAV. Residues histidine 88, 117-120, and histidine 122 contribute to the heme b site; that span reads DLYS. Over 107-125 the chain is Vesicular; that stretch reads FDYHRKKGIADLYSLHSWC. The chain crosses the membrane as a helical span at residues 126 to 146; that stretch reads GILVFVLFLAQWLVGLGFFLF. Residues 147 to 159 are Cytoplasmic-facing; the sequence is PGASFSLRSRYRP. Arginine 154 is a binding site for L-ascorbate. The chain crosses the membrane as a helical span at residues 160–180; sequence QHVFFGAAIFLLSVGTALLGL. Heme b is bound by residues histidine 161 and glutamate 182. Residues 181-199 are Vesicular-facing; the sequence is KEALLFQLGTKYSAFESEG. The chain crosses the membrane as a helical span at residues 200–220; that stretch reads VLANVLGLLLVAFGAVVLYIL. Residues 221 to 252 are Cytoplasmic-facing; sequence TRADWKRPLQAEEQALSMDFKTLTEGDSPSSQ. Heme b is bound at residue lysine 226. A phosphoserine mark is found at serine 248 and serine 250.

The cofactor is heme b.

It is found in the cytoplasmic vesicle. It localises to the secretory vesicle. Its subcellular location is the chromaffin granule membrane. It catalyses the reaction monodehydro-L-ascorbate radical(out) + L-ascorbate(in) = monodehydro-L-ascorbate radical(in) + L-ascorbate(out). Functionally, transmembrane reductase that uses ascorbate as an electron donor in the cytoplasm and transfers electrons across membranes to reduce monodehydro-L-ascorbate radical in the lumen of secretory vesicles. It is therefore involved the regeneration and homeostasis within secretory vesicles of ascorbate which in turn provides reducing equivalents needed to support the activity of intravesicular enzymes. This Sus scrofa (Pig) protein is Transmembrane ascorbate-dependent reductase CYB561 (CYB561).